The chain runs to 214 residues: Proteasome subunit beta type-6 (214 aa).

The propeptide at 1-14 (MEAPEWLDNAVDLG) is removed in mature form. Threonine 15 (nucleophile) is an active-site residue.

It belongs to the peptidase T1B family. In terms of assembly, the 26S proteasome consists of a 20S proteasome core and two 19S regulatory subunits. The 20S proteasome core is composed of 28 subunits that are arranged in four stacked rings, resulting in a barrel-shaped structure. The two end rings are each formed by seven alpha subunits, and the two central rings are each formed by seven beta subunits. The catalytic chamber with the active sites is on the inside of the barrel.

Its subcellular location is the cytoplasm. It is found in the nucleus. The enzyme catalyses Cleavage of peptide bonds with very broad specificity.. Its function is as follows. The proteasome is a multicatalytic proteinase complex which is characterized by its ability to cleave peptides with Arg, Phe, Tyr, Leu, and Glu adjacent to the leaving group at neutral or slightly basic pH. The proteasome has an ATP-dependent proteolytic activity. This chain is Proteasome subunit beta type-6 (psmB6), found in Dictyostelium discoideum (Social amoeba).